We begin with the raw amino-acid sequence, 294 residues long: Acetyl-coenzyme A carboxylase carboxyl transferase subunit beta (294 aa).

The 270-residue stretch at Ile25 to Glu294 folds into the CoA carboxyltransferase N-terminal domain. Residues Cys29, Cys32, Cys48, and Cys51 each contribute to the Zn(2+) site. The C4-type zinc-finger motif lies at Cys29–Cys51.

This sequence belongs to the AccD/PCCB family. Acetyl-CoA carboxylase is a heterohexamer composed of biotin carboxyl carrier protein (AccB), biotin carboxylase (AccC) and two subunits each of ACCase subunit alpha (AccA) and ACCase subunit beta (AccD). Zn(2+) is required as a cofactor.

The protein resides in the cytoplasm. The catalysed reaction is N(6)-carboxybiotinyl-L-lysyl-[protein] + acetyl-CoA = N(6)-biotinyl-L-lysyl-[protein] + malonyl-CoA. Its pathway is lipid metabolism; malonyl-CoA biosynthesis; malonyl-CoA from acetyl-CoA: step 1/1. Component of the acetyl coenzyme A carboxylase (ACC) complex. Biotin carboxylase (BC) catalyzes the carboxylation of biotin on its carrier protein (BCCP) and then the CO(2) group is transferred by the transcarboxylase to acetyl-CoA to form malonyl-CoA. This is Acetyl-coenzyme A carboxylase carboxyl transferase subunit beta from Blochmanniella pennsylvanica (strain BPEN).